The primary structure comprises 355 residues: MSDTTLSLLSPEKRKALEFAISQIERSFGKGSIMRLGDATSMKVETISSGALTLDLALGGGLPKGRIIEIYGPESSGKTTLALHAIAEVQKAGGVAAFVDAEHALDPTYAAALRVDIQNLLVAQPDTGEAALEIVDQLVRSTAVDIIVVDSVAALVPRAEIEGDMGESHVGLQARLMSQALRKINGNISKTGCTVIFLNQLRQKIGLTYGNPETTTGGVALKFYASVRLDIRRVQTLKKGTEEFGIRAKVKVAKNKVAPPFRIAEFDIIFGKGIANLGCILDMAEEVGVITRKGAWYSYNGENLAQGRDNTINYMEENPSFAQEIEQQVRQRFDQRVALSANTAAYTEEEIGEGE.

72 to 79 (GPESSGKT) lines the ATP pocket.

The protein belongs to the RecA family.

The protein localises to the cytoplasm. Its function is as follows. Can catalyze the hydrolysis of ATP in the presence of single-stranded DNA, the ATP-dependent uptake of single-stranded DNA by duplex DNA, and the ATP-dependent hybridization of homologous single-stranded DNAs. It interacts with LexA causing its activation and leading to its autocatalytic cleavage. The sequence is that of Protein RecA from Thermosynechococcus vestitus (strain NIES-2133 / IAM M-273 / BP-1).